We begin with the raw amino-acid sequence, 513 residues long: Bone morphogenetic protein 6 (513 aa).

Positions 1-20 are cleaved as a signal peptide; it reads MPGLGRRAQWLCWWWGLLCS. Residues 21–374 constitute a propeptide that is removed on maturation; the sequence is CCGPPPLRPP…VSEVHVRTTR (354 aa). 3 disordered regions span residues 38-66, 89-131, and 145-200; these read AAGGQLLGDGGSPGRTEQPPPSPQSSSGF, LPHR…RLKS, and ADND…ASPL. A compositionally biased stretch (low complexity) spans 98-121; sequence GLQQPQPPALRQQEEQQQQQQLPR. A compositionally biased stretch (polar residues) spans 158 to 172; that stretch reads QQSWPHEAASSSQRR. Asn241, Asn269, Asn386, Asn404, and Asn454 each carry an N-linked (GlcNAc...) asparagine glycan. Positions 373–398 are disordered; it reads TRSASSRRRQQSRNRSTQSQDVARVS. 3 disulfide bridges follow: Cys412–Cys478, Cys441–Cys510, and Cys445–Cys512.

Belongs to the TGF-beta family. In terms of assembly, interacts with SOSTDC1. Interacts (when glycosylated) with type I receptor ACVR1; the interaction may induce HAMP expression. Interacts with type II receptor ACVR2B. Interacts with Hemojuvelin/HJV. Interacts with ERFE; the interaction inhibits BMP-induced transcription of HAMP. Interacts with BMPR1A/ALK3. Forms heterodimers with BMP2 in vitro; the heterodimer then binds to its receptor BMPR1A /ALK3 and may induce HAMP expression. Post-translationally, glycosylated at Asn-454. Glycosylation is crucial for recognition by the activin receptor type I/ACVR1.

Its subcellular location is the secreted. Growth factor of the TGF-beta superfamily that plays essential roles in many developmental processes including cartilage and bone formation. Also plays an important role in the regulation of HAMP/hepcidin expression and iron metabolism by acting as a ligand for hemojuvelin/HJV. Also acts to promote expression of HAMP, potentially via the interaction with its receptor BMPR1A/ALK3. Initiates the canonical BMP signaling cascade by associating with type I receptor ACVR1 and type II receptor ACVR2B. In turn, ACVR1 propagates signal by phosphorylating SMAD1/5/8 that travel to the nucleus and act as activators and repressors of transcription of target. Can also signal through non-canonical pathway such as TAZ-Hippo signaling cascade to modulate VEGF signaling by regulating VEGFR2 expression. The chain is Bone morphogenetic protein 6 (BMP6) from Homo sapiens (Human).